Reading from the N-terminus, the 147-residue chain is Putative pre-16S rRNA nuclease (147 aa).

The protein belongs to the YqgF nuclease family.

It is found in the cytoplasm. Its function is as follows. Could be a nuclease involved in processing of the 5'-end of pre-16S rRNA. The polypeptide is Putative pre-16S rRNA nuclease (Ligilactobacillus salivarius (strain UCC118) (Lactobacillus salivarius)).